The chain runs to 169 residues: uncharacterized protein (169 aa).

Disordered stretches follow at residues 32–53 (VSGP…APAP) and 148–169 (VSGS…AGGA).

This is an uncharacterized protein from Homo sapiens (Human).